A 407-amino-acid chain; its full sequence is ATP-citrate synthase subunit alpha chain protein 1 (407 aa).

Citrate is bound by residues asparagine 327, threonine 329, and arginine 360.

This sequence belongs to the succinate/malate CoA ligase beta subunit family. Heterooctamer of 4 alpha and 4 beta chains.

The protein localises to the cytoplasm. It localises to the cytosol. The catalysed reaction is oxaloacetate + acetyl-CoA + ADP + phosphate = citrate + ATP + CoA. Its function is as follows. ATP citrate-lyase is the primary enzyme responsible for the synthesis of cytosolic acetyl-CoA, used for the elongation of fatty acids and biosynthesis of isoprenoids, flavonoids and malonated derivatives. May supply substrate to the cytosolic acetyl-CoA carboxylase, which generates the malonyl-CoA used for the synthesis of a multitude of compounds, including very long chain fatty acids and flavonoids. In contrast to all known animal ACL enzymes having a homomeric structure, plant ACLs are composed of alpha and beta chains. The sequence is that of ATP-citrate synthase subunit alpha chain protein 1 (ACLA-1) from Oryza sativa subsp. japonica (Rice).